A 190-amino-acid chain; its full sequence is Protein GrpE (190 aa).

Polar residues predominate over residues 1 to 11; that stretch reads MSNQDEPQNSP. The segment at 1 to 36 is disordered; it reads MSNQDEPQNSPEEFAEDQQADVALEEASSDSSETAA. Residues 13-28 are compositionally biased toward acidic residues; sequence EFAEDQQADVALEEAS.

It belongs to the GrpE family. As to quaternary structure, homodimer.

It localises to the cytoplasm. Participates actively in the response to hyperosmotic and heat shock by preventing the aggregation of stress-denatured proteins, in association with DnaK and GrpE. It is the nucleotide exchange factor for DnaK and may function as a thermosensor. Unfolded proteins bind initially to DnaJ; upon interaction with the DnaJ-bound protein, DnaK hydrolyzes its bound ATP, resulting in the formation of a stable complex. GrpE releases ADP from DnaK; ATP binding to DnaK triggers the release of the substrate protein, thus completing the reaction cycle. Several rounds of ATP-dependent interactions between DnaJ, DnaK and GrpE are required for fully efficient folding. This is Protein GrpE from Teredinibacter turnerae (strain ATCC 39867 / T7901).